A 91-amino-acid polypeptide reads, in one-letter code: Small ribosomal subunit protein uS15 (91 aa).

Belongs to the universal ribosomal protein uS15 family. In terms of assembly, part of the 30S ribosomal subunit. Forms a bridge to the 50S subunit in the 70S ribosome, contacting the 23S rRNA.

Its function is as follows. One of the primary rRNA binding proteins, it binds directly to 16S rRNA where it helps nucleate assembly of the platform of the 30S subunit by binding and bridging several RNA helices of the 16S rRNA. In terms of biological role, forms an intersubunit bridge (bridge B4) with the 23S rRNA of the 50S subunit in the ribosome. In Hydrogenobaculum sp. (strain Y04AAS1), this protein is Small ribosomal subunit protein uS15.